A 200-amino-acid chain; its full sequence is Ribonuclease HII (200 aa).

One can recognise an RNase H type-2 domain in the interval Glu-6 to Thr-200. 3 residues coordinate a divalent metal cation: Asp-12, Glu-13, and Asp-108.

The protein belongs to the RNase HII family. Requires Mn(2+) as cofactor. It depends on Mg(2+) as a cofactor.

It is found in the cytoplasm. It carries out the reaction Endonucleolytic cleavage to 5'-phosphomonoester.. Endonuclease that specifically degrades the RNA of RNA-DNA hybrids. The chain is Ribonuclease HII from Prochlorococcus marinus (strain MIT 9303).